Reading from the N-terminus, the 397-residue chain is LIM/homeobox protein Lhx3 (397 aa).

2 LIM zinc-binding domains span residues 31–81 (CAGC…CKDD) and 90–144 (CAAC…CKAD). Residue threonine 63 is modified to Phosphothreonine. Serine 71 bears the Phosphoserine mark. The homeobox DNA-binding region spans 157-216 (AKRPRTTITAKQLETLKSAYNTSPKPARHVREQLSSETGLDMRVVQVWFQNRRAKEKRLK). The segment at 212 to 397 (EKRLKKDAGR…WLDEVDHAQF (186 aa)) is disordered. Tyrosine 227 is subject to Phosphotyrosine. A phosphoserine mark is found at serine 234 and serine 238. Pro residues predominate over residues 316 to 331 (GVPPSPAAPQSLPGPQ).

As to quaternary structure, interacts with POU1F1. At neuronal promoters, interacts with LDB1, in motor neurons LDB1 is displaced by ISL1 and a ternary complex is formed in which ISL1 contacts both LHX3 and LDB1; allosteric structural changes in the DNA binding domain of LHX3, induced by the ISL1-LHX3 interaction, may explain differences in sequence specificity of the different complexes. Interacts with LDB2. May interact with CITED2/MRG1.

Its subcellular location is the nucleus. Functionally, transcription factor. Recognizes and binds to the consensus sequence motif 5'-AATTAATTA-3' in the regulatory elements of target genes, such as glycoprotein hormones alpha chain CGA and visual system homeobox CHX10, positively modulating transcription; transcription can be co-activated by LDB2. Synergistically enhances transcription from the prolactin promoter in cooperation with POU1F1/Pit-1. Required for the establishment of the specialized cells of the pituitary gland and the nervous system. Involved in the development of interneurons and motor neurons in cooperation with LDB1 and ISL1. The sequence is that of LIM/homeobox protein Lhx3 (LHX3) from Homo sapiens (Human).